The chain runs to 1286 residues: DNA-directed RNA polymerase 147 kDa polypeptide (1286 aa).

The protein belongs to the poxviridae DNA-directed RNA polymerase 147 kDa subunit family. The DNA-dependent RNA polymerase used for intermediate and late genes expression consists of eight subunits Rpo30/OPG66, Rpo7/OPG90, Rpo22/OPG103, Rpo147/OPG105, Rpo18/OPG119, Rpo19/OPG131, Rpo132/OPG151 and Rpo35/OPG156. The same holoenzyme, with the addition of the transcription-specificity factor OPG109, is used for early gene expression.

The protein resides in the virion. It carries out the reaction RNA(n) + a ribonucleoside 5'-triphosphate = RNA(n+1) + diphosphate. Functionally, part of the DNA-dependent RNA polymerase which catalyzes the transcription of viral DNA into RNA using the four ribonucleoside triphosphates as substrates. Responsible for the transcription of early, intermediate and late genes. DNA-dependent RNA polymerase associates with the early transcription factor (ETF), itself composed of OPG118 and OPG133, thereby allowing the early genes transcription. Late transcription, and probably also intermediate transcription, require newly synthesized RNA polymerase. In Vaccinia virus (strain Ankara) (VACV), this protein is DNA-directed RNA polymerase 147 kDa polypeptide (OPG105).